Consider the following 359-residue polypeptide: Probable mannitol dehydrogenase (359 aa).

7 residues coordinate Zn(2+): cysteine 50, histidine 72, cysteine 103, cysteine 106, cysteine 109, cysteine 117, and cysteine 165.

Belongs to the zinc-containing alcohol dehydrogenase family. Requires Zn(2+) as cofactor.

The enzyme catalyses D-mannitol + NAD(+) = D-mannose + NADH + H(+). Its function is as follows. Oxidizes mannitol to mannose. Provides the initial step by which translocated mannitol is committed to central metabolism and, by regulating mannitol pool size, is important in regulating salt tolerance at the cellular level. The protein is Probable mannitol dehydrogenase (CAD1) of Medicago sativa (Alfalfa).